Here is a 111-residue protein sequence, read N- to C-terminus: Succinate dehydrogenase assembly factor 1B, mitochondrial (111 aa).

Belongs to the complex I LYR family. SDHAF1 subfamily. Interacts with the iron-sulfur protein subunit within the SDH catalytic dimer.

It is found in the mitochondrion matrix. Functionally, plays an essential role in the assembly of succinate dehydrogenase (SDH), an enzyme complex (also referred to as respiratory complex II) that is a component of both the tricarboxylic acid (TCA) cycle and the mitochondrial electron transport chain, and which couples the oxidation of succinate to fumarate with the reduction of ubiquinone (coenzyme Q) to ubiquinol. Promotes maturation of the iron-sulfur protein subunit of the SDH catalytic dimer, protecting it from the deleterious effects of oxidants. May act together with SDHAF3. The sequence is that of Succinate dehydrogenase assembly factor 1B, mitochondrial from Dictyostelium discoideum (Social amoeba).